The primary structure comprises 52 residues: Teratocyte protein CftICK-I (52 aa).

A signal peptide spans 1–19 (MYKLCILFLVVIFAVMAIA). Disulfide bonds link cysteine 22-cysteine 37, cysteine 29-cysteine 41, and cysteine 36-cysteine 51.

As to expression, abundantly expressed by teratocytes, which are extra-embryonic cells released by parasitoid wasps into their hosts during larval eclosion.

The protein localises to the secreted. In terms of biological role, this endoparasitoid wasp peptide has immununosuppressive, antimicrobial and insecticidal activities. Suppress cellular immunity which is detectable as a reduction of hemocyte encapsulation in the host. Shows potent antifungal activity against C.albicans (MIC~0.25 ug/ml). In vivo, ingestion of this peptide (probably at excessive doses) increases larval mortality and reduces leaf consumption of D.saccharalis, a permissive host for C.flavipes. This Cotesia flavipes (Parasitic wasp) protein is Teratocyte protein CftICK-I.